The chain runs to 245 residues: Fibroblast growth factor-binding protein 3 (245 aa).

Residues 1 to 28 form the signal peptide; the sequence is MSPPRPRASLSPLTLLLLLGGCLLSAAG. The disordered stretch occupies residues 33–52; the sequence is AAGREVTRASRPTVGSSGRF. 2 disulfides stabilise this stretch: cysteine 60/cysteine 81 and cysteine 91/cysteine 125. The interval 136 to 216 is disordered; the sequence is CARKTAGSDL…PAAAGFQPNG (81 aa). Low complexity predominate over residues 170 to 180; that stretch reads RSRQSVRSPSS. An intrachain disulfide couples cysteine 228 to cysteine 236.

Belongs to the fibroblast growth factor-binding protein family. Interacts with FGF2. As to expression, in the adult, highly expressed in brain with lower levels in ovary. In the embryo, highest levels are found in the brain and spinal cord at 14 dpc and expression is almost completely restricted to the brain by 18 dpc. In the adult and postnatal brain, highly expressed in the orbitofrontal cortex where it is concentrated primarily in differentiated neurons.

It localises to the secreted. Functionally, heparin-binding protein which binds to FGF2, prevents binding of FGF2 to heparin and probably inhibits immobilization of FGF2 on extracellular matrix glycosaminoglycans, allowing its release and subsequent activation of FGFR signaling which leads to increased vascular permeability. The polypeptide is Fibroblast growth factor-binding protein 3 (Fgfbp3) (Mus musculus (Mouse)).